The chain runs to 788 residues: Ribonucleoside-diphosphate reductase subunit alpha (788 aa).

Residues 2–92 (ITVVKRNGRI…LYDLYHKVSG (91 aa)) enclose the ATP-cone domain. Residues Lys6, 12–18 (EPLDITK), and Thr52 each bind ATP. Thr200 lines the GDP pocket. Cysteines 216 and 497 form a disulfide. Residues 223–225 (DNI) and Arg253 contribute to the dTTP site. Asn424 contacts GDP. The Proton acceptor role is filled by Asn424. The active-site Cysteine radical intermediate is the Cys426. Residues Glu428 and 661–663 (SSI) contribute to the GDP site. Glu428 acts as the Proton acceptor in catalysis.

The protein belongs to the ribonucleoside diphosphate reductase large chain family. In terms of assembly, tetramer of two alpha and two beta subunits.

The catalysed reaction is a 2'-deoxyribonucleoside 5'-diphosphate + [thioredoxin]-disulfide + H2O = a ribonucleoside 5'-diphosphate + [thioredoxin]-dithiol. With respect to regulation, under complex allosteric control mediated by deoxynucleoside triphosphates and ATP binding to separate specificity and activation sites on the alpha subunit. The type of nucleotide bound at the specificity site determines substrate preference. It seems probable that ATP makes the enzyme reduce CDP and UDP, dGTP favors ADP reduction and dTTP favors GDP reduction. Stimulated by ATP and inhibited by dATP binding to the activity site. Provides the precursors necessary for DNA synthesis. Catalyzes the biosynthesis of deoxyribonucleotides from the corresponding ribonucleotides. The chain is Ribonucleoside-diphosphate reductase subunit alpha (nrdA) from Helicobacter pylori (strain J99 / ATCC 700824) (Campylobacter pylori J99).